The sequence spans 261 residues: Undecaprenyl-diphosphatase (261 aa).

Helical transmembrane passes span 38-58, 75-95, 106-126, 136-156, 181-201, 217-237, and 241-261; these read RSDF…TFVF, RDYV…GLAV, IQPI…AESV, VTWS…VFPG, FSFL…CFEL, VAFV…LGYI, and SFAP…TWLT.

The protein belongs to the UppP family.

It localises to the cell inner membrane. It catalyses the reaction di-trans,octa-cis-undecaprenyl diphosphate + H2O = di-trans,octa-cis-undecaprenyl phosphate + phosphate + H(+). In terms of biological role, catalyzes the dephosphorylation of undecaprenyl diphosphate (UPP). Confers resistance to bacitracin. The polypeptide is Undecaprenyl-diphosphatase (Xylella fastidiosa (strain Temecula1 / ATCC 700964)).